We begin with the raw amino-acid sequence, 750 residues long: MSTTIIGFPRLGEFRELKFTTEKYFRHEISAEELLAAAKELRAKHWNIVKEKGISEIPSNDFSHYDNVLDAAFLFNVVPSSVQGLELTDLERYFALARGYQGEKGDVRALPMKKWFNTNYHYIVPKFEKETQVKLAGHKIFDEFAEAKELGLVTRPVVVGPFTLLQVSDFEDGVAPADFVDALVVAYQEVFAKLAELGAERIQLDEPSLVKDLSAEEKALFLDLYKKLLADKKGLEVLVQTYFGDVRDIYADLVQLPVDAIGLDFVEGKKTLELVKGGFPADKTLYAGIVNGKNIWRNNYEKSLAVLEQIPAENIVLTSSCSLLHVPFTTANEEFEPAILNHFAFAVEKLDEIRDLDAIRNGGGAEALAANKELFATERVGENAELRARIAGLTDADYTRLPVFAEREEIQHKTLNLPPLPTTTIGSFPQTKEVRAKRLAFRKGELSQEDYDKFLAEQIDEWIKWQEEVGFDVLVHGEFERNDMVEYFGQNLSGYLFSKNGWVQSYGMRGVKPPIIWGDVTRLNPITVKWSSYAQSRTDKPVKGMLTGPVTILNWSFPREDISIKDSTLQIALAIKDEVLDLEAAGVKIIQIDEAALREKLPLRRSDWYEDYLDWAIPAFRLVHSTVAPDTQIHTHMCYSEFTDIIPAIDNMDADVISFEASRSNLEILDELKAKNFQTEVGPGVYDIHSPRVPNEGEIDHTIEAILAKVPSKKVWINPDCGLKTRGIPETKASLVRLVEAAKAARQHLK.

5-methyltetrahydropteroyltri-L-glutamate-binding positions include 15–18 (RELK) and Lys114. Residues 425–427 (IGS) and Glu478 contribute to the L-homocysteine site. Residues 425 to 427 (IGS) and Glu478 each bind L-methionine. Trp555 serves as a coordination point for 5-methyltetrahydropteroyltri-L-glutamate. L-homocysteine is bound at residue Asp593. Asp593 is a binding site for L-methionine. Glu599 serves as a coordination point for 5-methyltetrahydropteroyltri-L-glutamate. Zn(2+)-binding residues include His636, Cys638, and Glu660. His689 acts as the Proton donor in catalysis. Cys721 serves as a coordination point for Zn(2+).

The protein belongs to the vitamin-B12 independent methionine synthase family. Zn(2+) serves as cofactor.

It carries out the reaction 5-methyltetrahydropteroyltri-L-glutamate + L-homocysteine = tetrahydropteroyltri-L-glutamate + L-methionine. The protein operates within amino-acid biosynthesis; L-methionine biosynthesis via de novo pathway; L-methionine from L-homocysteine (MetE route): step 1/1. Catalyzes the transfer of a methyl group from 5-methyltetrahydrofolate to homocysteine resulting in methionine formation. This chain is 5-methyltetrahydropteroyltriglutamate--homocysteine methyltransferase, found in Streptococcus sanguinis (strain SK36).